A 250-amino-acid polypeptide reads, in one-letter code: MQLRQASVLPRLSPTNAECRPGELLHIIGPNGAGKSTLLARAAGLLAGEGEVYLAGTPLSQYTAADLAVRRAYLAQQQPPLALMPVFQYWQRHQPPLAQEYAVEKVVHFLAERLMLTDKLARPLTQLSGGEWQRVRLVAALLQIWPTINPHARLLLLDEPTNSLDVAQQVALDSLLSELCRLGIAVVVCAHDLNHSAHHADRVWLLSAGVLVAQGETEDVMLPEVLSPVFGVAFQRHVVDGRNWIITRSA.

The region spanning 3-233 (LRQASVLPRL…EVLSPVFGVA (231 aa)) is the ABC transporter domain. Residue 29–36 (GPNGAGKS) coordinates ATP.

It belongs to the ABC transporter superfamily. Vitamin B12 importer (TC 3.A.1.13.1) family. As to quaternary structure, the complex is composed of two ATP-binding proteins (BtuD), two transmembrane proteins (BtuC) and a solute-binding protein (BtuF).

The protein localises to the cell inner membrane. It carries out the reaction an R-cob(III)alamin(out) + ATP + H2O = an R-cob(III)alamin(in) + ADP + phosphate + H(+). Part of the ABC transporter complex BtuCDF involved in vitamin B12 import. Responsible for energy coupling to the transport system. In Pectobacterium atrosepticum (strain SCRI 1043 / ATCC BAA-672) (Erwinia carotovora subsp. atroseptica), this protein is Vitamin B12 import ATP-binding protein BtuD.